Here is a 260-residue protein sequence, read N- to C-terminus: MMRIAVGLEYRGVGFCGWQSQPQACGVQDAVEKAVSAIAGEAITVTAAGRTDTGVHAALQIVHFDTTSVRPLTAWVRGVNSHLPAGVAVLWAREVDAEFHARFAAFERGYRYVLLNHPVRPGLNAGLVGWHHRPLDVACMNRAASPLIGRHDFSAFRAAECQARSPVKELRRALIERRGDYLLCDFRADGFLHHMVRNLMGCLVQIGAGGRPPEWLHEVLAGRDRTRAAPTFEAAGLYLTHIRYPARFALPESSERWPFA.

The active-site Nucleophile is the aspartate 52. Tyrosine 110 serves as a coordination point for substrate.

The protein belongs to the tRNA pseudouridine synthase TruA family. As to quaternary structure, homodimer.

The catalysed reaction is uridine(38/39/40) in tRNA = pseudouridine(38/39/40) in tRNA. Its function is as follows. Formation of pseudouridine at positions 38, 39 and 40 in the anticodon stem and loop of transfer RNAs. This is tRNA pseudouridine synthase A from Thiobacillus denitrificans (strain ATCC 25259 / T1).